The chain runs to 405 residues: DNA polymerase processivity factor (405 aa).

The segment at 354 to 376 (GAGVKRRASEEEESDQPPKKLFP) is disordered. Positions 358–373 (KRRASEEEESDQPPKK) match the Bipartite nuclear localization signal motif.

It belongs to the herpesviridae DNA polymerase processivity factor family. In terms of assembly, interacts with the DNA polymerase catalytic subunit. Interacts with the origin-binding protein.

The protein resides in the host nucleus. Functionally, plays an essential role in viral DNA replication by acting as the polymerase accessory subunit. Associates with the viral polymerase to increase its processivity and forms high-affinity direct interactions with DNA. Facilitates the origin-binding protein loading onto DNA thus increasing its ability to assemble into a functional complex capable of unwinding duplex DNA. In Equine herpesvirus 1 (strain Ab4p) (EHV-1), this protein is DNA polymerase processivity factor.